Here is a 91-residue protein sequence, read N- to C-terminus: Small ribosomal subunit protein uS15 (91 aa).

Belongs to the universal ribosomal protein uS15 family. As to quaternary structure, part of the 30S ribosomal subunit. Forms a bridge to the 50S subunit in the 70S ribosome, contacting the 23S rRNA.

In terms of biological role, one of the primary rRNA binding proteins, it binds directly to 16S rRNA where it helps nucleate assembly of the platform of the 30S subunit by binding and bridging several RNA helices of the 16S rRNA. Its function is as follows. Forms an intersubunit bridge (bridge B4) with the 23S rRNA of the 50S subunit in the ribosome. The chain is Small ribosomal subunit protein uS15 from Rickettsia canadensis (strain McKiel).